A 513-amino-acid chain; its full sequence is Cyclin-dependent kinase C-2 (513 aa).

One can recognise a Protein kinase domain in the interval 26–325 (FEKLEQIGEG…AKDALDAEYF (300 aa)). Residues 32-40 (IGEGTYGQV) and Lys55 each bind ATP. Position 37 is a phosphotyrosine (Tyr37). Asp164 acts as the Proton acceptor in catalysis. At Thr198 the chain carries Phosphothreonine. The interval 337 to 513 (LPTYESSHEF…ARNQQYGWQP (177 aa)) is disordered. Residues 395-404 (AGPNHPMNNN) show a composition bias toward low complexity. A compositionally biased stretch (polar residues) spans 434–448 (SGNQTGGYNNQSRGG). 2 stretches are compositionally biased toward gly residues: residues 461–476 (APYG…GYGV) and 483–496 (QGGG…GSGR).

This sequence belongs to the protein kinase superfamily. CMGC Ser/Thr protein kinase family. CDC2/CDKX subfamily. As to quaternary structure, interacts with CYCT1-3. Highly expressed in flowers. Expressed in seedlings, roots, rosettes and stems.

It catalyses the reaction L-seryl-[protein] + ATP = O-phospho-L-seryl-[protein] + ADP + H(+). It carries out the reaction L-threonyl-[protein] + ATP = O-phospho-L-threonyl-[protein] + ADP + H(+). The enzyme catalyses [DNA-directed RNA polymerase] + ATP = phospho-[DNA-directed RNA polymerase] + ADP + H(+). The protein is Cyclin-dependent kinase C-2 (CDKC-2) of Arabidopsis thaliana (Mouse-ear cress).